Here is a 91-residue protein sequence, read N- to C-terminus: Probable Fe(2+)-trafficking protein (91 aa).

The protein belongs to the Fe(2+)-trafficking protein family.

Its function is as follows. Could be a mediator in iron transactions between iron acquisition and iron-requiring processes, such as synthesis and/or repair of Fe-S clusters in biosynthetic enzymes. This is Probable Fe(2+)-trafficking protein from Shewanella denitrificans (strain OS217 / ATCC BAA-1090 / DSM 15013).